Here is a 143-residue protein sequence, read N- to C-terminus: MKIPVFLLLLALANAKVFQRCEWARVLKARGMDGYRGISLADWVCLSKWESQYNTNAINHNTDGSTDYGIFQINSRWWCNDDRIPTRNACNIKCSALQTDDVTVAINCAKRVVSDPQGIRAWVAWNRHCQNRDLSAYIAGCGL.

A signal peptide spans 1 to 15 (MKIPVFLLLLALANA). A C-type lysozyme domain is found at 16-143 (KVFQRCEWAR…LSAYIAGCGL (128 aa)). Cystine bridges form between Cys21–Cys141, Cys45–Cys129, Cys79–Cys94, and Cys90–Cys108. Active-site residues include Glu50 and Asp67.

The protein belongs to the glycosyl hydrolase 22 family. In terms of assembly, monomer.

The protein resides in the secreted. The catalysed reaction is Hydrolysis of (1-&gt;4)-beta-linkages between N-acetylmuramic acid and N-acetyl-D-glucosamine residues in a peptidoglycan and between N-acetyl-D-glucosamine residues in chitodextrins.. Lysozymes have primarily a bacteriolytic function; those in tissues and body fluids are associated with the monocyte-macrophage system and enhance the activity of immunoagents. The polypeptide is Lysozyme C (Takifugu rubripes (Japanese pufferfish)).